The sequence spans 270 residues: Sorting nexin-11 (270 aa).

Residues 16-132 (VITVRVQDPR…HLFLQSQLSV (117 aa)) form the PX domain. Positions 59, 85, and 99 each coordinate a 1,2-diacyl-sn-glycero-3-phospho-(1D-myo-inositol-3-phosphate). The segment at 135–139 (IEACV) is important for membrane trafficking. Positions 168–177 (SSSHLAKGDQ) are enriched in basic and acidic residues. The tract at residues 168–203 (SSSHLAKGDQPKSCCFLPRSGRRSSPSPPPSEEKDH) is disordered.

This sequence belongs to the sorting nexin family. In terms of assembly, monomer. Interacts with TRPV3; this interaction promotes TRPV3 trafficking from the cell membrane to lysosome for degradation.

The protein resides in the cell membrane. The protein localises to the endosome. Its subcellular location is the cytoplasm. Phosphoinositide-binding protein involved in protein sorting and membrane trafficking in endosomes. Regulates the levels of TRPV3 by promoting its trafficking from the cell membrane to lysosome for degradation. The sequence is that of Sorting nexin-11 (SNX11) from Homo sapiens (Human).